The primary structure comprises 413 residues: Probable short/branched chain specific acyl-CoA dehydrogenase (413 aa).

FAD contacts are provided by residues 152-161 and 186-188; these read FCLSESGSGS and WIT. Serine 161 serves as a coordination point for substrate. Substrate-binding positions include tyrosine 208, tyrosine 262, and 270–273; that span reads NEGR. FAD-binding positions include arginine 298, glutamine 309, and 366 to 370; that span reads SMLGG. Catalysis depends on glutamate 393, which acts as the Proton acceptor. Position 395–397 (395–397) interacts with FAD; that stretch reads TSN.

This sequence belongs to the acyl-CoA dehydrogenase family. Homotetramer. FAD is required as a cofactor.

The catalysed reaction is 2-methylbutanoyl-CoA + oxidized [electron-transfer flavoprotein] + H(+) = (2E)-2-methylbut-2-enoyl-CoA + reduced [electron-transfer flavoprotein]. The protein operates within lipid metabolism; mitochondrial fatty acid beta-oxidation. Its pathway is amino-acid degradation; L-isoleucine degradation. In terms of biological role, probable short and branched chain specific acyl-CoA dehydrogenase that catalyzes the removal of one hydrogen from C-2 and C-3 of the fatty acyl-CoA thioester, resulting in the formation of trans-2-enoyl-CoA. The polypeptide is Probable short/branched chain specific acyl-CoA dehydrogenase (acadsb) (Dictyostelium discoideum (Social amoeba)).